Consider the following 386-residue polypeptide: Methylthioribose-1-phosphate isomerase (386 aa).

The active-site Proton donor is the D255.

It belongs to the eIF-2B alpha/beta/delta subunits family. MtnA subfamily.

It localises to the cytoplasm. It is found in the nucleus. It catalyses the reaction 5-(methylsulfanyl)-alpha-D-ribose 1-phosphate = 5-(methylsulfanyl)-D-ribulose 1-phosphate. It functions in the pathway amino-acid biosynthesis; L-methionine biosynthesis via salvage pathway; L-methionine from S-methyl-5-thio-alpha-D-ribose 1-phosphate: step 1/6. Catalyzes the interconversion of methylthioribose-1-phosphate (MTR-1-P) into methylthioribulose-1-phosphate (MTRu-1-P). The polypeptide is Methylthioribose-1-phosphate isomerase (Trypanosoma brucei brucei (strain 927/4 GUTat10.1)).